The chain runs to 483 residues: Glutamyl-tRNA(Gln) amidotransferase subunit A (483 aa).

Residues K76 and S151 each act as charge relay system in the active site. The active-site Acyl-ester intermediate is S175.

It belongs to the amidase family. GatA subfamily. As to quaternary structure, heterotrimer of A, B and C subunits.

It catalyses the reaction L-glutamyl-tRNA(Gln) + L-glutamine + ATP + H2O = L-glutaminyl-tRNA(Gln) + L-glutamate + ADP + phosphate + H(+). Its function is as follows. Allows the formation of correctly charged Gln-tRNA(Gln) through the transamidation of misacylated Glu-tRNA(Gln) in organisms which lack glutaminyl-tRNA synthetase. The reaction takes place in the presence of glutamine and ATP through an activated gamma-phospho-Glu-tRNA(Gln). The sequence is that of Glutamyl-tRNA(Gln) amidotransferase subunit A from Pseudomonas putida (strain ATCC 47054 / DSM 6125 / CFBP 8728 / NCIMB 11950 / KT2440).